Reading from the N-terminus, the 363-residue chain is NudC domain-containing protein 3 (363 aa).

The disordered stretch occupies residues 120–143; it reads AADLSGPQEVEKEEPPGSQDPEHT. Positions 128 to 143 are enriched in basic and acidic residues; that stretch reads EVEKEEPPGSQDPEHT. The region spanning 187–279 is the CS domain; sequence AIRENYIWSQ…VGEYWWSAIL (93 aa). A phosphoserine mark is found at Ser-342 and Ser-357.

This is NudC domain-containing protein 3 (Nudcd3) from Mus musculus (Mouse).